A 105-amino-acid chain; its full sequence is Replication restart protein PriB (105 aa).

The SSB domain maps to Met-1–Asp-102.

It belongs to the PriB family. Homodimer. Interacts with PriA and DnaT. Component of the replication restart primosome. Primosome assembly occurs via a 'hand-off' mechanism. PriA binds to replication forks, subsequently PriB then DnaT bind; DnaT then displaces ssDNA to generate the helicase loading substrate.

In terms of biological role, involved in the restart of stalled replication forks, which reloads the replicative helicase on sites other than the origin of replication; the PriA-PriB pathway is the major replication restart pathway. During primosome assembly it facilitates complex formation between PriA and DnaT on DNA; stabilizes PriA on DNA. Stimulates the DNA unwinding activity of PriA helicase. The chain is Replication restart protein PriB from Proteus mirabilis (strain HI4320).